A 727-amino-acid chain; its full sequence is Polyribonucleotide nucleotidyltransferase (727 aa).

Positions 491 and 497 each coordinate Mg(2+). The KH domain occupies 558–617; that stretch reads PRIITASIHPDKIREVIGPGGKTIKKIIDETGVKIDIEDDGRVFISAVDGEAGENALKII. The 75-residue stretch at 627–701 folds into the S1 motif domain; it reads GRIYNGRVTR…KQGRLNLSRK (75 aa). The segment at 698 to 727 is disordered; sequence LSRKEALPNPNPSSNPNPNGITANRNPRNS. The segment covering 717–727 has biased composition (polar residues); the sequence is GITANRNPRNS.

This sequence belongs to the polyribonucleotide nucleotidyltransferase family. Mg(2+) serves as cofactor.

The protein resides in the cytoplasm. It carries out the reaction RNA(n+1) + phosphate = RNA(n) + a ribonucleoside 5'-diphosphate. Involved in mRNA degradation. Catalyzes the phosphorolysis of single-stranded polyribonucleotides processively in the 3'- to 5'-direction. In Desulfitobacterium hafniense (strain Y51), this protein is Polyribonucleotide nucleotidyltransferase.